The following is a 254-amino-acid chain: 3-deoxy-manno-octulosonate cytidylyltransferase (254 aa).

The protein belongs to the KdsB family.

Its subcellular location is the cytoplasm. The enzyme catalyses 3-deoxy-alpha-D-manno-oct-2-ulosonate + CTP = CMP-3-deoxy-beta-D-manno-octulosonate + diphosphate. Its pathway is nucleotide-sugar biosynthesis; CMP-3-deoxy-D-manno-octulosonate biosynthesis; CMP-3-deoxy-D-manno-octulosonate from 3-deoxy-D-manno-octulosonate and CTP: step 1/1. It participates in bacterial outer membrane biogenesis; lipopolysaccharide biosynthesis. Its function is as follows. Activates KDO (a required 8-carbon sugar) for incorporation into bacterial lipopolysaccharide in Gram-negative bacteria. This is 3-deoxy-manno-octulosonate cytidylyltransferase from Polynucleobacter necessarius subsp. necessarius (strain STIR1).